Here is a 433-residue protein sequence, read N- to C-terminus: Enolase (433 aa).

Gln-167 is a binding site for (2R)-2-phosphoglycerate. Glu-209 functions as the Proton donor in the catalytic mechanism. Positions 246, 291, and 318 each coordinate Mg(2+). Residues Lys-343, Arg-372, Ser-373, and Lys-394 each contribute to the (2R)-2-phosphoglycerate site. The Proton acceptor role is filled by Lys-343.

The protein belongs to the enolase family. Component of the RNA degradosome, a multiprotein complex involved in RNA processing and mRNA degradation. Mg(2+) is required as a cofactor.

It localises to the cytoplasm. The protein localises to the secreted. Its subcellular location is the cell surface. The enzyme catalyses (2R)-2-phosphoglycerate = phosphoenolpyruvate + H2O. Its pathway is carbohydrate degradation; glycolysis; pyruvate from D-glyceraldehyde 3-phosphate: step 4/5. Its function is as follows. Catalyzes the reversible conversion of 2-phosphoglycerate (2-PG) into phosphoenolpyruvate (PEP). It is essential for the degradation of carbohydrates via glycolysis. The chain is Enolase from Vibrio vulnificus (strain YJ016).